The primary structure comprises 377 residues: Succinyl-diaminopimelate desuccinylase (377 aa).

Histidine 71 serves as a coordination point for Zn(2+). Aspartate 73 is a catalytic residue. Aspartate 102 lines the Zn(2+) pocket. Residue glutamate 132 is the Proton acceptor of the active site. Glutamate 133, glutamate 161, and histidine 346 together coordinate Zn(2+).

This sequence belongs to the peptidase M20A family. DapE subfamily. In terms of assembly, homodimer. Requires Zn(2+) as cofactor. Co(2+) serves as cofactor.

It carries out the reaction N-succinyl-(2S,6S)-2,6-diaminopimelate + H2O = (2S,6S)-2,6-diaminopimelate + succinate. It participates in amino-acid biosynthesis; L-lysine biosynthesis via DAP pathway; LL-2,6-diaminopimelate from (S)-tetrahydrodipicolinate (succinylase route): step 3/3. Functionally, catalyzes the hydrolysis of N-succinyl-L,L-diaminopimelic acid (SDAP), forming succinate and LL-2,6-diaminopimelate (DAP), an intermediate involved in the bacterial biosynthesis of lysine and meso-diaminopimelic acid, an essential component of bacterial cell walls. The polypeptide is Succinyl-diaminopimelate desuccinylase (Rhizorhabdus wittichii (strain DSM 6014 / CCUG 31198 / JCM 15750 / NBRC 105917 / EY 4224 / RW1) (Sphingomonas wittichii)).